A 243-amino-acid polypeptide reads, in one-letter code: Vesicle-associated membrane protein-associated protein B (243 aa).

Alanine 2 carries the post-translational modification N-acetylalanine. Topologically, residues 2–218 (AKVEQVLSLE…PAPATPGKEE (217 aa)) are cytoplasmic. The MSP domain maps to 7–124 (VLSLEPQHEL…MDSKLRCVFE (118 aa)). A Phosphoserine modification is found at serine 146. A Glycyl lysine isopeptide (Lys-Gly) (interchain with G-Cter in SUMO1) cross-link involves residue lysine 147. Threonine 150 is subject to Phosphothreonine. A phosphoserine mark is found at serine 158 and serine 159. Positions 161–196 (LDDTEVKKVMEECKRLQSEVQRLREENKQLKEEDGL) form a coiled coil. Positions 185-197 (EENKQLKEEDGLR) are enriched in basic and acidic residues. Residues 185 to 217 (EENKQLKEEDGLRMRKPVLSNSPAPAPATPGKE) are disordered. Position 206 is a phosphoserine (serine 206). A helical; Anchor for type IV membrane protein transmembrane segment spans residues 219 to 239 (GLSTRLLALVVLFFIVGVIIG).

Belongs to the VAMP-associated protein (VAP) (TC 9.B.17) family. In terms of assembly, homodimer, and heterodimer with VAPA. Interacts with VAMP1 and VAMP2. Interacts (via MSP domain) with ZFYVE27. Interacts with RMDN3. Interacts with KIF5A in a ZFYVE27-dependent manner. Interacts (via MSP domain) with STARD3 (via phospho-FFAT motif). Interacts with STARD3NL (via FFAT motif). Interacts with CERT1. Interacts with PLEKHA3 and SACM1L to form a ternary complex. Interacts with VPS13A (via FFAT motif). Interacts with RB1CC1 (via phosphorylated FFAT motif), MIGA2 (via phosphorylated FFAT motif), RMDN3 (via phosphorylated FFAT motif), OSBPL1A (via FFAT motif), KCNB1 (via phosphorylated FFAT motif) and KCNB2 (via phosphorylated FFAT motif). Interacts (via MSP domain) with WDR44 (via FFAT motif); the interactions connect the endoplasmic reticulum (ER) with the endosomal tubule.

It localises to the endoplasmic reticulum membrane. In terms of biological role, endoplasmic reticulum (ER)-anchored protein that mediates the formation of contact sites between the ER and endosomes via interaction with FFAT motif-containing proteins such as STARD3 or WDR44. Interacts with STARD3 in a FFAT motif phosphorylation dependent manner. Via interaction with WDR44 participates in neosynthesized protein export. Participates in the endoplasmic reticulum unfolded protein response (UPR) by inducing ERN1/IRE1 activity. Involved in cellular calcium homeostasis regulation. The chain is Vesicle-associated membrane protein-associated protein B from Sus scrofa (Pig).